Reading from the N-terminus, the 110-residue chain is Large ribosomal subunit protein uL22 (110 aa).

It belongs to the universal ribosomal protein uL22 family. Part of the 50S ribosomal subunit.

In terms of biological role, this protein binds specifically to 23S rRNA; its binding is stimulated by other ribosomal proteins, e.g. L4, L17, and L20. It is important during the early stages of 50S assembly. It makes multiple contacts with different domains of the 23S rRNA in the assembled 50S subunit and ribosome. Its function is as follows. The globular domain of the protein is located near the polypeptide exit tunnel on the outside of the subunit, while an extended beta-hairpin is found that lines the wall of the exit tunnel in the center of the 70S ribosome. This is Large ribosomal subunit protein uL22 from Pseudoalteromonas translucida (strain TAC 125).